The following is a 360-amino-acid chain: Photosystem II protein D1 (360 aa).

Helical transmembrane passes span 30–47 (YVGWFGVLMIPCLLAAAA), 119–134 (HFLIGISAYMGRQWEL), and 143–157 (WICVAYSAPVSAAFA). H119 contributes to the chlorophyll a binding site. Residue Y127 coordinates pheophytin a. The [CaMn4O5] cluster site is built by D171 and E190. The chain crosses the membrane as a helical span at residues 198-219 (FHMAGVAGMFGGSLFSAMHGSL). H199 is a binding site for chlorophyll a. A quinone-binding positions include H216 and 265–266 (SF). Residue H216 coordinates Fe cation. Fe cation is bound at residue H273. A helical membrane pass occupies residues 275 to 289 (FLAVFPVVCVWLTSM). [CaMn4O5] cluster contacts are provided by H333, E334, D343, and A345. A propeptide spanning residues 346-360 (AAESTTVALSAPAIG) is cleaved from the precursor.

This sequence belongs to the reaction center PufL/M/PsbA/D family. As to quaternary structure, PSII is composed of 1 copy each of membrane proteins PsbA, PsbB, PsbC, PsbD, PsbE, PsbF, PsbH, PsbI, PsbJ, PsbK, PsbL, PsbM, PsbT, PsbX, PsbY, Psb30/Ycf12, peripheral proteins PsbO, CyanoQ (PsbQ), PsbU, PsbV and a large number of cofactors. It forms dimeric complexes. The D1/D2 heterodimer binds P680, chlorophylls that are the primary electron donor of PSII, and subsequent electron acceptors. It shares a non-heme iron and each subunit binds pheophytin, quinone, additional chlorophylls, carotenoids and lipids. D1 provides most of the ligands for the Mn4-Ca-O5 cluster of the oxygen-evolving complex (OEC). There is also a Cl(-1) ion associated with D1 and D2, which is required for oxygen evolution. The PSII complex binds additional chlorophylls, carotenoids and specific lipids. serves as cofactor. Tyr-162 forms a radical intermediate that is referred to as redox-active TyrZ, YZ or Y-Z. Post-translationally, C-terminally processed by CtpA; processing is essential to allow assembly of the oxygen-evolving complex and thus photosynthetic growth.

The protein localises to the cellular thylakoid membrane. The catalysed reaction is 2 a plastoquinone + 4 hnu + 2 H2O = 2 a plastoquinol + O2. Photosystem II (PSII) is a light-driven water:plastoquinone oxidoreductase that uses light energy to abstract electrons from H(2)O, generating O(2) and a proton gradient subsequently used for ATP formation. It consists of a core antenna complex that captures photons, and an electron transfer chain that converts photonic excitation into a charge separation. The D1/D2 (PsbA/PsbD) reaction center heterodimer binds P680, the primary electron donor of PSII as well as several subsequent electron acceptors. The sequence is that of Photosystem II protein D1 from Prochlorococcus marinus (strain MIT 9312).